A 524-amino-acid polypeptide reads, in one-letter code: Tissue-resident T-cell transcription regulator protein ZNF683 (524 aa).

Basic and acidic residues predominate over residues 130 to 142; it reads NKDKLGKQPERAG. Disordered regions lie at residues 130-166 and 265-303; these read NKDKLGKQPERAGEGAPCPAFSSHNSSSPPPLQNRKS and QALPSQARNPGAGAAPTDSPGLERGGMASPAKRVPLSSQ. 2 consecutive C2H2-type zinc fingers follow at residues 322–344 and 350–372; these read YECNICGKSFGQLSNLKVHLRVH and FQCALCQKSFTQLAHLQKHHLVH. A C2H2-type 3; degenerate zinc finger spans residues 398–420; it reads REREVCHKRFSSSSNLKTHLRLH. The C2H2-type 4 zinc finger occupies 426-448; that stretch reads FQCSVCRSRFTQHIHLKLHHRLH.

Belongs to the krueppel C2H2-type zinc-finger protein family. Expressed in terminally differentiated effector CD8(+) T-cells, but not in naive and central memory cells. Expressed in terminally differentiated natural killer (NK) cells and natural killer (NKT) T-cells (at protein level). Expressed strongly in effector-type CD8(+) T-cells and weakly in naive and memory CD8(+) T-cells. Expressed in terminally differentiated natural killer (NK) cells. Isoform 2 is strongly expressed in effector CD8(+) T and natural killer (NK) cells. Isoform 1 is expressed in effector CD8(+) T and natural killer (NK) cells. In terms of tissue distribution, (Microbial infection) Expressed in cytomegalovirus (CMV)-infected effector CD8(+) T-cells (at protein level).

It is found in the nucleus. In terms of biological role, transcription factor that mediates a transcriptional program in various innate and adaptive immune tissue-resident lymphocyte T-cell types such as tissue-resident memory T (Trm), natural killer (trNK) and natural killer T (NKT) cells and negatively regulates gene expression of proteins that promote the egress of tissue-resident T-cell populations from non-lymphoid organs. Plays a role in the development, retention and long-term establishment of adaptive and innate tissue-resident lymphocyte T cell types in non-lymphoid organs, such as the skin and gut, but also in other nonbarrier tissues like liver and kidney, and therefore may provide immediate immunological protection against reactivating infections or viral reinfection. Also plays a role in the differentiation of both thymic and peripheral NKT cells. Negatively regulates the accumulation of interferon-gamma (IFN-gamma) in NKT cells at steady state or after antigenic stimulation. Positively regulates granzyme B production in NKT cells after innate stimulation. Associates with the transcriptional repressor PRDM1/BLIMP1 to chromatin at gene promoter regions. Its function is as follows. Lacks transcriptional repressor activity. Binds to DNA within promoter regions of the transcriptional repressor PRDM1/BLIMP1 target sites. Unable to regulate interferon-gamma (IFN-gamma) production in cytomegalovirus (CMV)-infected effector CD8(+) T-cells. Transcriptional repressor that binds to DNA within promoter regions of the transcriptional repressor PRDM1/BLIMP1 target sites. Regulates interferon-gamma (IFN-gamma) production in cytomegalovirus (CMV)-infected effector CD8(+) T cells. The polypeptide is Tissue-resident T-cell transcription regulator protein ZNF683 (Homo sapiens (Human)).